The primary structure comprises 253 residues: ATP synthase subunit a (253 aa).

6 helical membrane passes run 30–50, 88–108, 118–138, 144–164, 184–204, and 211–231; these read FTNAAFFMLVIVALASLVLLA, FFPFVFSIFMFVFLANLIGLV, IAVTFGLAMIVIGTVVIYGLI, FLGIFAPSGVSPLLLPFMIMI, MLAGHITLKVMGGFVAGLLGA, and VAPLPLAMVVIFTAFELLVAF.

The protein belongs to the ATPase A chain family. As to quaternary structure, F-type ATPases have 2 components, CF(1) - the catalytic core - and CF(0) - the membrane proton channel. CF(1) has five subunits: alpha(3), beta(3), gamma(1), delta(1), epsilon(1). CF(0) has three main subunits: a(1), b(2) and c(9-12). The alpha and beta chains form an alternating ring which encloses part of the gamma chain. CF(1) is attached to CF(0) by a central stalk formed by the gamma and epsilon chains, while a peripheral stalk is formed by the delta and b chains.

Its subcellular location is the cell inner membrane. Functionally, key component of the proton channel; it plays a direct role in the translocation of protons across the membrane. The protein is ATP synthase subunit a of Beijerinckia indica subsp. indica (strain ATCC 9039 / DSM 1715 / NCIMB 8712).